Reading from the N-terminus, the 209-residue chain is Ion-translocating oxidoreductase complex subunit G (209 aa).

The Cytoplasmic segment spans residues 1-8 (MLTAIRKN). The chain crosses the membrane as a helical span at residues 9–29 (GLILAVFACVSTGLVALTYAL). Residues 30–209 (TAEQIQQQEQ…HNQPNPCEGQ (180 aa)) are Periplasmic-facing. Thr-175 bears the FMN phosphoryl threonine mark.

It belongs to the RnfG family. The complex is composed of six subunits: RnfA, RnfB, RnfC, RnfD, RnfE and RnfG. FMN serves as cofactor.

It is found in the cell inner membrane. Its function is as follows. Part of a membrane-bound complex that couples electron transfer with translocation of ions across the membrane. The sequence is that of Ion-translocating oxidoreductase complex subunit G from Vibrio cholerae serotype O1 (strain ATCC 39541 / Classical Ogawa 395 / O395).